We begin with the raw amino-acid sequence, 248 residues long: Granulin (248 aa).

This sequence belongs to the polyhedrin family.

Functionally, component of the virus occlusion bodies, which are large proteinaceous structures, that protect the virus from the outside environment for extended periods until they are ingested by insect larvae. This chain is Granulin, found in Zygaenidae (burnets).